We begin with the raw amino-acid sequence, 380 residues long: Tubby-like F-box protein 9 (380 aa).

In terms of domain architecture, F-box spans 30–76; it reads PFSWSELPEELLREILIRVETVDGGDWPSRRNVVACAGVCRSWRILT. Positions 258–283 are disordered; that stretch reads SSRSSPVFRSHSKPLRSNSASCSDSG. A compositionally biased stretch (polar residues) spans 272–283; the sequence is LRSNSASCSDSG.

Belongs to the TUB family. As to quaternary structure, part of a SCF (SKP1-cullin-F-box) protein ligase complex. Interacts with SKP1A/ASK1 and XERICO. Ubiquitous.

Its pathway is protein modification; protein ubiquitination. Functionally, component of SCF(ASK-cullin-F-box) E3 ubiquitin ligase complexes, which may mediate the ubiquitination and subsequent proteasomal degradation of target proteins. Confers sensitivity to ABA during seed germination and early seedling development. The polypeptide is Tubby-like F-box protein 9 (Arabidopsis thaliana (Mouse-ear cress)).